The chain runs to 394 residues: Elongation factor Tu 1 (394 aa).

A tr-type G domain is found at 10 to 204; that stretch reads KPHVNVGTIG…ALDSYIPQPE (195 aa). A G1 region spans residues 19–26; it reads GHVDHGKT. Residue 19–26 participates in GTP binding; that stretch reads GHVDHGKT. Position 26 (Thr26) interacts with Mg(2+). Residues 60-64 form a G2 region; that stretch reads GITIN. The tract at residues 81-84 is G3; that stretch reads DCPG. Residues 81-85 and 136-139 contribute to the GTP site; these read DCPGH and NKCD. A G4 region spans residues 136-139; it reads NKCD. The tract at residues 174-176 is G5; it reads SAL.

The protein belongs to the TRAFAC class translation factor GTPase superfamily. Classic translation factor GTPase family. EF-Tu/EF-1A subfamily. As to quaternary structure, monomer.

The protein localises to the cytoplasm. It catalyses the reaction GTP + H2O = GDP + phosphate + H(+). In terms of biological role, GTP hydrolase that promotes the GTP-dependent binding of aminoacyl-tRNA to the A-site of ribosomes during protein biosynthesis. The sequence is that of Elongation factor Tu 1 from Yersinia pestis bv. Antiqua (strain Nepal516).